Consider the following 560-residue polypeptide: Embryonal Fyn-associated substrate (560 aa).

In terms of domain architecture, SH3 spans 5-68 (TSAQLARALY…PANRVKLLPA (64 aa)). Disordered regions lie at residues 176–219 (VVPQ…LYAA) and 241–372 (ANGE…NEYE). The span at 198–210 (AELERDPEWEGGR) shows a compositional bias: basic and acidic residues. Tyr253 carries the post-translational modification Phosphotyrosine; by SRC. Over residues 259-268 (GPEPPSPEPP) the composition is skewed to pro residues. 2 consecutive short sequence motifs (SH3-binding) follow at residues 304–310 (RPLPALP) and 334–340 (RPLPPPP). Low complexity predominate over residues 305 to 315 (PLPALPVSEAP). Positions 351–361 (PEGDPECREVA) are enriched in basic and acidic residues. The interval 437–487 (FYAGQCQSHYSALQAAVAALVASTQANQPPCLFVPHGKRVVVAAHRLVFVG) is divergent helix-loop-helix motif.

This sequence belongs to the CAS family. In terms of processing, phosphorylated on multiple tyrosine residues. Phosphorylated on tyrosines by FYN and SRC. As to expression, widely expressed. Higher levels found in placenta and embryo. Lower levels found in brain, brainstem, muscle and lung. No expression in liver and intestine.

In terms of biological role, docking protein which plays a central coordinating role for tyrosine-kinase-based signaling related to cell adhesion. May serve as an activator of SRC and a downstream effector. Interacts with the SH3 domain of FYN and with CRK, SRC, and YES. This chain is Embryonal Fyn-associated substrate (Efs), found in Mus musculus (Mouse).